We begin with the raw amino-acid sequence, 153 residues long: Putative pre-16S rRNA nuclease (153 aa).

This sequence belongs to the YqgF nuclease family.

The protein localises to the cytoplasm. In terms of biological role, could be a nuclease involved in processing of the 5'-end of pre-16S rRNA. The chain is Putative pre-16S rRNA nuclease from Prochlorococcus marinus (strain MIT 9215).